We begin with the raw amino-acid sequence, 100 residues long: UPF0213 protein YhbQ (100 aa).

Residues 2–77 form the GIY-YIG domain; sequence TPWFLYLIRT…KQLTKRQKER (76 aa).

It belongs to the UPF0213 family.

The chain is UPF0213 protein YhbQ from Shigella dysenteriae serotype 1 (strain Sd197).